The following is a 275-amino-acid chain: Autophagy-related protein 5 (275 aa).

Lys129 participates in a covalent cross-link: Glycyl lysine isopeptide (Lys-Gly) (interchain with G-Cter in lgg-3/ATG12). Low complexity predominate over residues 221 to 231 (LSSSSSSSTDS). The segment at 221 to 241 (LSSSSSSSTDSQSEHPPRLIS) is disordered.

This sequence belongs to the ATG5 family. Most likely a component of a complex at least containing atg-5, lgg-3/ATG12, atg-16.1 and/or atg-16.2. Interacts with lgg-3/ATG12. Interacts with atg-16.1 (via N-terminus) and atg-16.2 (via N-terminus). Post-translationally, conjugated to lgg-3/ATG12; which is essential for autophagy.

It localises to the preautophagosomal structure membrane. Involved in autophagic vesicle formation. Conjugation with lgg-3/ATG12, through a ubiquitin-like conjugating system involving atg-7 as an E1-like activating enzyme and atg-10 as an E2-like conjugating enzyme, is essential for its function. Most likely a component of an atg-5-lgg-3-atg-16 complex that promotes autophagosome formation by associating with lgg-2, but not lgg-1, at the preautophagosomal membrane. Probably, as part of an atg-5-lgg-3-atg-16 complex, required for lgg-1 lipidation; the complex acts as an E3-like enzyme promoting atg-3-mediated lgg-1 lipidation. Furthermore, association with atg-16.2 is required for the nucleation of lgg-1 positive autophagic vesicles. The chain is Autophagy-related protein 5 from Caenorhabditis elegans.